The following is a 462-amino-acid chain: Argininosuccinate lyase (462 aa).

The protein belongs to the lyase 1 family. Argininosuccinate lyase subfamily.

The protein resides in the cytoplasm. The catalysed reaction is 2-(N(omega)-L-arginino)succinate = fumarate + L-arginine. Its pathway is amino-acid biosynthesis; L-arginine biosynthesis; L-arginine from L-ornithine and carbamoyl phosphate: step 3/3. This Streptococcus agalactiae serotype V (strain ATCC BAA-611 / 2603 V/R) protein is Argininosuccinate lyase.